The chain runs to 382 residues: Glucose-1-phosphate adenylyltransferase (382 aa).

Alpha-D-glucose 1-phosphate-binding positions include tyrosine 100, glycine 165, 180–181, and serine 191; that span reads EK.

It belongs to the bacterial/plant glucose-1-phosphate adenylyltransferase family. In terms of assembly, homotetramer.

It catalyses the reaction alpha-D-glucose 1-phosphate + ATP + H(+) = ADP-alpha-D-glucose + diphosphate. It participates in glycan biosynthesis; glycogen biosynthesis. Functionally, involved in the biosynthesis of ADP-glucose, a building block required for the elongation reactions to produce glycogen. Catalyzes the reaction between ATP and alpha-D-glucose 1-phosphate (G1P) to produce pyrophosphate and ADP-Glc. In Clostridium novyi (strain NT), this protein is Glucose-1-phosphate adenylyltransferase.